Reading from the N-terminus, the 186-residue chain is ATP synthase subunit b, chloroplastic (186 aa).

A helical membrane pass occupies residues 26-44; that stretch reads ILETNLINLGVVIGTLLYF.

It belongs to the ATPase B chain family. In terms of assembly, F-type ATPases have 2 components, F(1) - the catalytic core - and F(0) - the membrane proton channel. F(1) has five subunits: alpha(3), beta(3), gamma(1), delta(1), epsilon(1). F(0) has four main subunits: a(1), b(1), b'(1) and c(10-14). The alpha and beta chains form an alternating ring which encloses part of the gamma chain. F(1) is attached to F(0) by a central stalk formed by the gamma and epsilon chains, while a peripheral stalk is formed by the delta, b and b' chains.

It is found in the plastid. It localises to the chloroplast thylakoid membrane. Its function is as follows. F(1)F(0) ATP synthase produces ATP from ADP in the presence of a proton or sodium gradient. F-type ATPases consist of two structural domains, F(1) containing the extramembraneous catalytic core and F(0) containing the membrane proton channel, linked together by a central stalk and a peripheral stalk. During catalysis, ATP synthesis in the catalytic domain of F(1) is coupled via a rotary mechanism of the central stalk subunits to proton translocation. In terms of biological role, component of the F(0) channel, it forms part of the peripheral stalk, linking F(1) to F(0). In Chara vulgaris (Common stonewort), this protein is ATP synthase subunit b, chloroplastic.